The sequence spans 579 residues: Mycobactin import ATP-binding/permease protein IrtB (579 aa).

Topologically, residues 1–25 are cytoplasmic; the sequence is MIRTLLRLVPAEKRGAVAGYAVLTL. The ABC transmembrane type-1 domain maps to 21–299; the sequence is AVLTLLSVLL…IADLAPALET (279 aa). The helical transmembrane segment at 26-46 threads the bilayer; it reads LSVLLRAVGAVLLIPLLAALF. At 47–48 the chain is on the periplasmic side; the sequence is SD. The helical transmembrane segment at 49–69 threads the bilayer; sequence TPSDAWLWLGWLTAVTLAGWV. Topologically, residues 70–126 are cytoplasmic; it reads TDTNTARLGFDLGFAVLSRTQHDMADRLPNVAMSWFTPDNTATARQAIAATGPELAG. The next 2 membrane-spanning stretches (helical) occupy residues 127-147 and 148-168; these read LVVN…AIGV and ALLF…AVLF. At 169–241 the chain is on the cytoplasmic side; that stretch reads GALALSGRLS…RLLTMQIPGQ (73 aa). Residues 242–262 traverse the membrane as a helical segment; the sequence is VLFSLAGQVALIGFAGMAVWL. At 263–272 the chain is on the periplasmic side; the sequence is TVRGQLGVPE. A helical transmembrane segment spans residues 273–293; sequence AIALIVVLVRYLEPFAAIADL. Over 294 to 579 the chain is Cytoplasmic; the sequence is APALETTRAT…SEWAIGSTAR (286 aa). The ABC transporter domain occupies 332–565; the sequence is IEFDDVRFSY…GGRFAQFWAQ (234 aa). 364 to 371 contacts ATP; it reads GPSGSGKT.

This sequence belongs to the ABC transporter superfamily. Siderophore-Fe(3+) uptake transporter (SIUT) (TC 3.A.1.21) family. Forms a heterodimer with IrtA.

The protein resides in the cell inner membrane. With respect to regulation, the ATPase activity of IrtAB is stimulated more than 38-fold in the presence of Fe-MBT, and more than 10-fold in the presence of Fe-cMBT. Functionally, part of the ABC transporter complex IrtAB involved in the import of iron-bound mycobactin (Fe-MBT) and carboxymycobactin (Fe-cMBT). Has a preference for Fe-MBT over Fe-cMBT. Transmembrane domains (TMD) form a pore in the membrane and the ATP-binding domain (NBD) is responsible for energy generation. This chain is Mycobactin import ATP-binding/permease protein IrtB, found in Mycolicibacterium thermoresistibile (strain ATCC 19527 / DSM 44167 / CIP 105390 / JCM 6362 / NCTC 10409 / 316) (Mycobacterium thermoresistibile).